The following is a 654-amino-acid chain: Protein fem-1 homolog A-like (654 aa).

ANK repeat units follow at residues 2–31 (DLHT…REEL), 40–70 (GGGT…SVEA), 82–111 (EGAP…SVNR), 115–145 (TNST…DLEV), 149–178 (HGHT…QVNR), 182–211 (KGNT…RMER), and 214–243 (YGMT…SHEQ). Ser-108 bears the Phosphoserine mark. The interval 241 to 265 (HEQLSGTELPGEGSSQMAGNHCSTP) is disordered. The span at 253 to 263 (GSSQMAGNHCS) shows a compositional bias: polar residues. TPR repeat units lie at residues 283–317 (VEAL…RHQG) and 375–408 (SYYI…QQNN). 2 ANK repeats span residues 519–561 (NGFT…DPDS) and 565–594 (DNNS…HMDA). Ser-608 bears the Phosphoserine mark.

This sequence belongs to the fem-1 family. As to quaternary structure, component of a CRL2 E3 ubiquitin-protein ligase complex, also named ECS (Elongin BC-CUL2/5-SOCS-box protein) complex, composed of CUL2, Elongin BC (ELOB and ELOC), RBX1 and substrate-specific adapter FEM1A.

The protein localises to the mitochondrion. The protein resides in the cytoplasm. The protein operates within protein modification; protein ubiquitination. Its function is as follows. Substrate-recognition component of a Cul2-RING (CRL2) E3 ubiquitin-protein ligase complex of the DesCEND (destruction via C-end degrons) pathway, which recognizes a C-degron located at the extreme C terminus of target proteins, leading to their ubiquitination and degradation. The C-degron recognized by the DesCEND pathway is usually a motif of less than ten residues and can be present in full-length proteins, truncated proteins or proteolytically cleaved forms. The CRL2(FEM1A) complex specifically recognizes proteins with an arginine at the C-terminus: recognizes and binds proteins ending with -Lys/Arg-Xaa-Arg and -Lys/Arg-Xaa-Xaa-Arg C-degrons, such as SIL1 or OR51B2, leading to their ubiquitination and degradation. This Mus musculus (Mouse) protein is Protein fem-1 homolog A-like.